The primary structure comprises 121 residues: NAD(P)H-quinone oxidoreductase subunit M (121 aa).

The protein belongs to the complex I NdhM subunit family. NDH-1 can be composed of about 15 different subunits; different subcomplexes with different compositions have been identified which probably have different functions.

The protein localises to the cellular thylakoid membrane. The enzyme catalyses a plastoquinone + NADH + (n+1) H(+)(in) = a plastoquinol + NAD(+) + n H(+)(out). It catalyses the reaction a plastoquinone + NADPH + (n+1) H(+)(in) = a plastoquinol + NADP(+) + n H(+)(out). Functionally, NDH-1 shuttles electrons from an unknown electron donor, via FMN and iron-sulfur (Fe-S) centers, to quinones in the respiratory and/or the photosynthetic chain. The immediate electron acceptor for the enzyme in this species is believed to be plastoquinone. Couples the redox reaction to proton translocation, and thus conserves the redox energy in a proton gradient. Cyanobacterial NDH-1 also plays a role in inorganic carbon-concentration. This chain is NAD(P)H-quinone oxidoreductase subunit M, found in Synechococcus sp. (strain JA-2-3B'a(2-13)) (Cyanobacteria bacterium Yellowstone B-Prime).